The following is a 241-amino-acid chain: Copper transport protein CTR3 (241 aa).

The Lumenal segment spans residues 1–41; sequence MNMGGSSSTAAKKATCKISMLWNWYTIDTCFIARSWRNDTK. A helical transmembrane segment spans residues 42 to 62; the sequence is GKFAGSCIGCFALVVVAQWLT. Residues 63-159 are Cytoplasmic-facing; that stretch reads RFSRQFDVEL…SCCTLITPVD (97 aa). Residues 160 to 180 form a helical membrane-spanning segment; the sequence is LYPTFLDHMIRVTIFVLQWGL. At 181–182 the chain is on the lumenal side; that stretch reads SY. The helical transmembrane segment at 183–203 threads the bilayer; the sequence is IIMLLFMYYNGYIIISCLIGA. Residues 204 to 241 lie on the Cytoplasmic side of the membrane; it reads IVGRFIFCYEPLGSLGANGSAQGTVSYDKESDDRKCCL.

It belongs to the copper transporter (Ctr) (TC 1.A.56) family. SLC31A subfamily.

The protein resides in the cytoplasmic vesicle membrane. Functionally, required for high affinity copper (probably reduced Cu I) transport into the cell. The chain is Copper transport protein CTR3 (CTR3) from Saccharomyces cerevisiae (strain ATCC 204508 / S288c) (Baker's yeast).